The following is a 61-amino-acid chain: Small ribosomal subunit protein uS14 (61 aa).

The Zn(2+) site is built by Cys-24, Cys-27, Cys-40, and Cys-43.

This sequence belongs to the universal ribosomal protein uS14 family. Zinc-binding uS14 subfamily. Part of the 30S ribosomal subunit. Contacts proteins S3 and S10. The cofactor is Zn(2+).

Functionally, binds 16S rRNA, required for the assembly of 30S particles and may also be responsible for determining the conformation of the 16S rRNA at the A site. The protein is Small ribosomal subunit protein uS14 of Geobacter metallireducens (strain ATCC 53774 / DSM 7210 / GS-15).